The sequence spans 314 residues: MTFRMILAFFTLCATSLFFGANQIEWSLLPTFNEKAWLPIIASRLPRLVALILTGSGLAMCGVILQHIVRNRFVEPGTTGSLDAAKLGILVSIVMLPSSDKLERMFFAVLFCFAAGLVYIAIIRKVKFSNTALVPVIGLMFGSVLSALAEFYAYQNNILQSMSGWLMGDFSKVVQEHYEIIFLILPITLLTYLYAHRFTVMGMGEDIASNLGISYAMTAALGLILVSITVAVTVVTVGAIHFVGLVIPNLVALKYGDHLKNTLPIVALGGASLLIFCDVISRVVLFPFEVPVGLTASAVGGVMFLAFLLKGAKA.

The next 10 membrane-spanning stretches (helical) occupy residues 1-21 (MTFR…FFGA), 49-69 (VALI…QHIV), 76-96 (PGTT…IVML), 103-123 (ERMF…IAII), 132-152 (ALVP…AEFY), 180-200 (IIFL…RFTV), 207-226 (IASN…LILV), 230-252 (VAVT…NLVA), 265-285 (IVAL…RVVL), and 288-308 (FEVP…LAFL).

This sequence belongs to the binding-protein-dependent transport system permease family. FecCD subfamily. As to quaternary structure, part of an iron transport system composed of the outer membrane receptor FatA, the periplasmic binding protein FatB and the inner membrane proteins FatC and FatD.

The protein localises to the cell inner membrane. In terms of biological role, involved in the uptake of iron in complex with the siderophore anguibactin. Responsible for the translocation of ferric-anguibactin across the cytoplasmic membrane. The polypeptide is Ferric-anguibactin transport system permease protein FatD (Vibrio anguillarum (strain ATCC 68554 / 775) (Listonella anguillarum)).